The primary structure comprises 446 residues: Regulator of drug sensitivity 2 (446 aa).

The zn(2)-C6 fungal-type DNA-binding region spans 15–45 (KTCLFCKRSHVVCDKQRPCSRCVKRDIAHLC). Disordered regions lie at residues 52-106 (VPNE…PKLD) and 158-218 (ASNV…KEES). Polar residues-rich tracts occupy residues 56-70 (MPSQHESSPNDNNIQ) and 84-96 (DYQNEPVNKSGST). Ser102 is subject to Phosphoserine. Residues 160-177 (NVHLENGSQTTQSPLEYQ) are compositionally biased toward polar residues. Residues 178 to 192 (NDNRRDEIGVARQEN) show a composition bias toward basic and acidic residues. Residues 193-206 (RSPTIMSGSSNSIS) show a composition bias toward polar residues. Residues 207-218 (KGDKQDQEKEES) are compositionally biased toward basic and acidic residues. At Thr231 the chain carries Phosphothreonine.

In terms of processing, phosphorylated by SNF1 in absence of glucose. The phosphorylation is required for induction of transcription of gluconeogenic genes.

Its subcellular location is the cytoplasm. The protein localises to the nucleus. In terms of biological role, transcription factor which regulates the expression of genes for gluconeogenesis, the TCA cycle, and glucose metabolism. Involved in the cell wall remodeling process and drug resistance. The protein is Regulator of drug sensitivity 2 (RDS2) of Saccharomyces cerevisiae (strain ATCC 204508 / S288c) (Baker's yeast).